The following is a 107-amino-acid chain: Thiosulfate sulfurtransferase GlpE (107 aa).

A Rhodanese domain is found at 17 to 105; it reads RQGEAVLVDI…WLKAFPLETE (89 aa). Cys-65 (cysteine persulfide intermediate) is an active-site residue.

The protein belongs to the GlpE family.

The protein localises to the cytoplasm. The enzyme catalyses thiosulfate + hydrogen cyanide = thiocyanate + sulfite + 2 H(+). It carries out the reaction thiosulfate + [thioredoxin]-dithiol = [thioredoxin]-disulfide + hydrogen sulfide + sulfite + 2 H(+). In terms of biological role, transferase that catalyzes the transfer of sulfur from thiosulfate to thiophilic acceptors such as cyanide or dithiols. May function in a CysM-independent thiosulfate assimilation pathway by catalyzing the conversion of thiosulfate to sulfite, which can then be used for L-cysteine biosynthesis. This chain is Thiosulfate sulfurtransferase GlpE, found in Sodalis glossinidius (strain morsitans).